A 257-amino-acid chain; its full sequence is ECF RNA polymerase sigma factor SigE (257 aa).

Positions 87-153 are sigma-70 factor domain-2; it reads LVRQHADRVY…FLDMVRRRAR (67 aa). The short motif at 111–114 is the Polymerase core binding element; it reads DLTQ. Positions 186–236 are sigma-70 factor domain-4; it reads LQAALASLPPEFRAAVVLCDIEGLSYEEIGATLGVKLGTVRSRIHRGRQAL. The segment at residues 211–230 is a DNA-binding region (H-T-H motif); sequence YEEIGATLGVKLGTVRSRIH.

It belongs to the sigma-70 factor family. ECF subfamily. Interacts transiently with the RNA polymerase catalytic core formed by RpoA, RpoB, RpoC and RpoZ (2 alpha, 1 beta, 1 beta' and 1 omega subunit) to form the RNA polymerase holoenzyme that can initiate transcription. Interacts (via sigma-70 factor domain 4) with cognate anti-sigma-E factor RseA under reducing conditions, which stops the sigma factor from functioning.

Sigma factors are initiation factors that promote the attachment of RNA polymerase to specific initiation sites and are then released. Extracytoplasmic function (ECF) sigma factors are held in an inactive form by an anti-sigma factor until released. Responds to surface stress (H(2)O(2)). The polypeptide is ECF RNA polymerase sigma factor SigE (sigE) (Mycobacterium tuberculosis (strain ATCC 35801 / TMC 107 / Erdman)).